A 603-amino-acid chain; its full sequence is NAD 5'-nucleotidase (603 aa).

Residues Met1–Ala25 form the signal peptide. Positions 44, 46, 94, 126, and 227 each coordinate Zn(2+). Substrate-binding positions include Arg397, Arg437, Phe456, and Tyr540–Asp546.

Belongs to the 5'-nucleotidase family. The cofactor is Zn(2+).

It is found in the periplasm. It catalyses the reaction a ribonucleoside 5'-phosphate + H2O = a ribonucleoside + phosphate. In terms of biological role, degrades NAD into adenosine and nicotinamide riboside, the latter being subsequently internalized by a specific permease. Also endowed with NAD(P) pyrophosphatase activity. Exhibits a broad substrate specificity, recognizing either mono- or dinucleotide nicotinamides and different adenosine phosphates with a maximal activity on 5'-adenosine monophosphate. The polypeptide is NAD 5'-nucleotidase (Haemophilus influenzae (strain ATCC 51907 / DSM 11121 / KW20 / Rd)).